Here is a 265-residue protein sequence, read N- to C-terminus: uncharacterized protein (265 aa).

This is an uncharacterized protein from Mycoplasma capricolum subsp. capricolum (strain California kid / ATCC 27343 / NCTC 10154).